The chain runs to 199 residues: Achaete-scute homolog 1 (199 aa).

Positions 37 to 56 are disordered; it reads PAEEQQASKAKPIKRQRSAS. The 53-residue stretch at 81-133 folds into the bHLH domain; the sequence is AAVARRNERERNRVKLVNLGFATLREHVPNGAANKKMSKVETLRSAVEYIRAL. Positions 162–179 are enriched in polar residues; sequence HDMNSMAGSPVSSYSSDE. The interval 162 to 189 is disordered; the sequence is HDMNSMAGSPVSSYSSDEGSYDPLSPEE.

Efficient DNA binding requires dimerization with another bHLH protein. Neuronal precursor cells.

Its subcellular location is the nucleus. Functionally, transcription factor that plays a key role in neuronal differentiation: acts as a pioneer transcription factor, accessing closed chromatin to allow other factors to bind and activate neural pathways. Directly binds the E box motif (5'-CANNTG-3') on promoters and promotes transcription of neuronal genes. The combination of three transcription factors, ASCL1, POU3F2/BRN2 and MYT1L, is sufficient to reprogram fibroblasts and other somatic cells into induced neuronal (iN) cells in vitro. The chain is Achaete-scute homolog 1 (ascl1) from Xenopus laevis (African clawed frog).